The following is a 147-amino-acid chain: uncharacterized protein (147 aa).

The tract at residues 29–147 (PYGNNSVHQG…GHHHGHHHKH (119 aa)) is disordered. Polar residues-rich tracts occupy residues 34–45 (SVHQGQPHTDQN) and 60–73 (PQAQYGNAGQNQPS). The span at 75-92 (PFGGAGYTGPTAGTGFGN) shows a compositional bias: gly residues. Basic residues predominate over residues 122–147 (DGHHKKHGRKEHDHHHGHHHGHHHKH).

This is an uncharacterized protein from Caenorhabditis elegans.